The primary structure comprises 136 residues: General odorant-binding protein 57d (136 aa).

Residues 1 to 29 (MPEKMSLRLVPHLACIIFILEIQFRIADS) form the signal peptide. Intrachain disulfides connect Cys-33–Cys-70, Cys-66–Cys-118, and Cys-107–Cys-127.

The protein belongs to the PBP/GOBP family.

In terms of biological role, present in the aqueous fluid surrounding olfactory sensory dendrites and are thought to aid in the capture and transport of hydrophobic odorants into and through this fluid. This is General odorant-binding protein 57d from Drosophila melanogaster (Fruit fly).